The sequence spans 500 residues: NADH-quinone oxidoreductase subunit N (500 aa).

Helical transmembrane passes span 6-26 (SWIAVYPELVLLVMACLIALV), 40-60 (ALTLLTLGAVAVMEASYALGG), 69-89 (MVVVDPMGSWLKCFSSIALMI), 106-125 (GGEFFTLSLFALLGMFVMIS), 129-151 (FLVLYMGLELMTLCSYALVALRR), 164-184 (FVLGALASGFLLYGLSMLYGA), 207-227 (LVFGLVFIVAGLAFKLGAVPF), 239-259 (PTAVTLIIGGAPQLAAFAMTI), 276-296 (MLALMAIGSLVIGNLAAVAQT), 302-322 (LAFSTISQMGFLLLGLLAGVV), 337-357 (MFYALTYVLTTLAAFGIILLL), 380-400 (YAGVMAMSMFSLAGLPPLVGF), 417-437 (SYLVLAVFAVFMSLIGAFYYL), and 464-484 (IVLAINGALLLVLGIAPSSLM).

This sequence belongs to the complex I subunit 2 family. As to quaternary structure, NDH-1 is composed of 14 different subunits. Subunits NuoA, H, J, K, L, M, N constitute the membrane sector of the complex.

The protein localises to the cell inner membrane. It carries out the reaction a quinone + NADH + 5 H(+)(in) = a quinol + NAD(+) + 4 H(+)(out). NDH-1 shuttles electrons from NADH, via FMN and iron-sulfur (Fe-S) centers, to quinones in the respiratory chain. The immediate electron acceptor for the enzyme in this species is believed to be ubiquinone. Couples the redox reaction to proton translocation (for every two electrons transferred, four hydrogen ions are translocated across the cytoplasmic membrane), and thus conserves the redox energy in a proton gradient. The chain is NADH-quinone oxidoreductase subunit N from Polaromonas naphthalenivorans (strain CJ2).